The sequence spans 156 residues: ATP synthase subunit b (156 aa).

The chain crosses the membrane as a helical span at residues 7-27 (LIAQFVVFFILAGFTMKFVWP).

It belongs to the ATPase B chain family. As to quaternary structure, F-type ATPases have 2 components, F(1) - the catalytic core - and F(0) - the membrane proton channel. F(1) has five subunits: alpha(3), beta(3), gamma(1), delta(1), epsilon(1). F(0) has three main subunits: a(1), b(2) and c(10-14). The alpha and beta chains form an alternating ring which encloses part of the gamma chain. F(1) is attached to F(0) by a central stalk formed by the gamma and epsilon chains, while a peripheral stalk is formed by the delta and b chains.

The protein resides in the cell inner membrane. Functionally, f(1)F(0) ATP synthase produces ATP from ADP in the presence of a proton or sodium gradient. F-type ATPases consist of two structural domains, F(1) containing the extramembraneous catalytic core and F(0) containing the membrane proton channel, linked together by a central stalk and a peripheral stalk. During catalysis, ATP synthesis in the catalytic domain of F(1) is coupled via a rotary mechanism of the central stalk subunits to proton translocation. Component of the F(0) channel, it forms part of the peripheral stalk, linking F(1) to F(0). The polypeptide is ATP synthase subunit b (Herminiimonas arsenicoxydans).